A 365-amino-acid polypeptide reads, in one-letter code: Cobalt-precorrin-5B C(1)-methyltransferase (365 aa).

This sequence belongs to the CbiD family.

It carries out the reaction Co-precorrin-5B + S-adenosyl-L-methionine = Co-precorrin-6A + S-adenosyl-L-homocysteine. It functions in the pathway cofactor biosynthesis; adenosylcobalamin biosynthesis; cob(II)yrinate a,c-diamide from sirohydrochlorin (anaerobic route): step 6/10. Its function is as follows. Catalyzes the methylation of C-1 in cobalt-precorrin-5B to form cobalt-precorrin-6A. The chain is Cobalt-precorrin-5B C(1)-methyltransferase from Clostridium perfringens (strain SM101 / Type A).